Here is a 271-residue protein sequence, read N- to C-terminus: GATA transcription factor 19 (271 aa).

The tract at residues 1-23 (MAAEPPADGRDPPADDGAAGDGA) is disordered. The Tify domain maps to 33 to 68 (LSAASEQLTLVYQGEVYVFDPVPPQKVQAVLLVLGG). The region spanning 95–137 (RIASLMRFREKRKERCFDKKIRYSVRKEVAQKMKRRKGQFAGR) is the CCT domain. A GATA-type zinc finger spans residues 166-193 (CQNCGISSRLTPAMRRGPAGPRSLCNAC). Positions 238-271 (NQTTMKTDTEMVPEQEQKADVLPPTKEEDSMATS) are disordered. The segment covering 252–271 (QEQKADVLPPTKEEDSMATS) has biased composition (basic and acidic residues).

It belongs to the type IV zinc-finger family. Class C subfamily.

Its subcellular location is the nucleus. Its function is as follows. Transcriptional activator that specifically binds 5'-GATA-3' or 5'-GAT-3' motifs within gene promoters. The protein is GATA transcription factor 19 of Oryza sativa subsp. indica (Rice).